The primary structure comprises 862 residues: Rab GTPase-binding effector protein 1 (862 aa).

At Ala-2 the chain carries N-acetylalanine. Positions 11–345 form a coiled coil; the sequence is DVSLQQRVAE…KKADVEEEIK (335 aa). Lys-282 carries the N6-acetyllysine modification. The disordered stretch occupies residues 315–338; the sequence is ELKKKDQEDDEQQRLNKRKDHKKA. Ser-374, Ser-377, and Ser-407 each carry phosphoserine. Thr-408 bears the Phosphothreonine mark. Ser-410 is subject to Phosphoserine. Residues 435–447 form an interaction with AP1G1, AP1G2, GGA1, GGA2 and GGA3 region; it reads DESDFGPLVGADS. Positions 534–816 form a coiled coil; the sequence is DMCSNYEKQL…LQTELDVSEQ (283 aa).

Belongs to the rabaptin family. Homodimer when bound to RAB5A. Heterodimer with RABGEF1. The heterodimer binds RAB4A and RAB5A that have been activated by GTP-binding. Interacts with TSC2. Interacts with GGA1 (via GAE domain), GGA2 (via GAE domain) and GGA3 (via GAE domain). Interacts with AP1G1 (via GAE domain). Interacts with AP1G2 (via GAE domain). Interacts with ECPAS. Interacts with KCNH1. Interacts with PKD1 (via C-terminal domain) and GGA1; the interactions recruit PKD1:PKD2 complex to GGA1 and ARL3 at trans-Golgi network. Proteolytic cleavage by caspases in apoptotic cells causes loss of endosome fusion activity.

It localises to the cytoplasm. The protein localises to the early endosome. The protein resides in the recycling endosome. It is found in the cytoplasmic vesicle. Functionally, rab effector protein acting as linker between gamma-adaptin, RAB4A and RAB5A. Involved in endocytic membrane fusion and membrane trafficking of recycling endosomes. Involved in KCNH1 channels trafficking to and from the cell membrane. Stimulates RABGEF1 mediated nucleotide exchange on RAB5A. Mediates the traffic of PKD1:PKD2 complex from the endoplasmic reticulum through the Golgi to the cilium. This chain is Rab GTPase-binding effector protein 1 (RABEP1), found in Homo sapiens (Human).